A 76-amino-acid chain; its full sequence is Small ribosomal subunit protein bS18 (76 aa).

The protein belongs to the bacterial ribosomal protein bS18 family. As to quaternary structure, part of the 30S ribosomal subunit. Forms a tight heterodimer with protein bS6.

Functionally, binds as a heterodimer with protein bS6 to the central domain of the 16S rRNA, where it helps stabilize the platform of the 30S subunit. The protein is Small ribosomal subunit protein bS18 of Psychrobacter arcticus (strain DSM 17307 / VKM B-2377 / 273-4).